The following is a 64-amino-acid chain: Large ribosomal subunit protein bL35 (64 aa).

The segment at 1-28 (MPKVKTKSGAKKRFKLTGSGKIKRKSAY) is disordered.

It belongs to the bacterial ribosomal protein bL35 family.

The polypeptide is Large ribosomal subunit protein bL35 (Cytophaga hutchinsonii (strain ATCC 33406 / DSM 1761 / CIP 103989 / NBRC 15051 / NCIMB 9469 / D465)).